Here is a 131-residue protein sequence, read N- to C-terminus: Sec-independent protein translocase protein TatB (131 aa).

Residues 2-22 (LGSLSWEHMLVLVVVGLVVLG) form a helical membrane-spanning segment. The segment at 96-131 (AFDRPVNGAAAQPPPAPAPPPEPHRSGQTPFDADAT) is disordered. Residues 107–116 (QPPPAPAPPP) are compositionally biased toward pro residues.

It belongs to the TatB family. As to quaternary structure, the Tat system comprises two distinct complexes: a TatABC complex, containing multiple copies of TatA, TatB and TatC subunits, and a separate TatA complex, containing only TatA subunits. Substrates initially bind to the TatABC complex, which probably triggers association of the separate TatA complex to form the active translocon.

The protein resides in the cell membrane. Functionally, part of the twin-arginine translocation (Tat) system that transports large folded proteins containing a characteristic twin-arginine motif in their signal peptide across membranes. Together with TatC, TatB is part of a receptor directly interacting with Tat signal peptides. TatB may form an oligomeric binding site that transiently accommodates folded Tat precursor proteins before their translocation. The protein is Sec-independent protein translocase protein TatB of Mycolicibacterium paratuberculosis (strain ATCC BAA-968 / K-10) (Mycobacterium paratuberculosis).